Reading from the N-terminus, the 278-residue chain is Rhomboid protease GlpG (278 aa).

The next 6 helical transmembrane spans lie at 94–114 (AGPLTLSVMVLCIAIYILMLI), 143–163 (AFLHFSLLHILFNLMWWWYLG), 175–195 (LLVLTIVSAVFSGWGQSLFSG), 196–216 (ANFGGLSGVVYALMGYVWLTG), 224–241 (ISLPRGLMAFSVLWLIAG), and 245–267 (ILGLSIANAAHVSGLIIGLLMAF). S202 (nucleophile) is an active-site residue. Residue H255 is part of the active site.

This sequence belongs to the peptidase S54 family.

It localises to the cell inner membrane. The enzyme catalyses Cleaves type-1 transmembrane domains using a catalytic dyad composed of serine and histidine that are contributed by different transmembrane domains.. Functionally, rhomboid-type serine protease that catalyzes intramembrane proteolysis. The sequence is that of Rhomboid protease GlpG from Yersinia pestis bv. Antiqua (strain Antiqua).